A 210-amino-acid chain; its full sequence is Sortase A (210 aa).

Topologically, residues 1–5 (MNKQR) are cytoplasmic. Residues 6 to 26 (IYSIVAILLFVVGGVLIGKPF) form a helical membrane-spanning segment. The Extracellular portion of the chain corresponds to 27 to 210 (YDGYQAEKKQ…GDLVGTKAKK (184 aa)). The active-site Proton donor/acceptor is His-126. The active-site Acyl-thioester intermediate is the Cys-187.

The protein belongs to the bacterial sortase family. Class A subfamily.

It is found in the cell membrane. Its activity is regulated as follows. Inhibited by thiol-reactive reagents. Its function is as follows. Transpeptidase that anchors surface proteins to the cell wall. Recognizes and modifies its substrate by proteolytic cleavage of a C-terminal sorting signal. Following cleavage, a covalent intermediate is formed via a thioester bond between the sortase and its substrate, which is then transferred and covalently attached to the cell wall. This sortase recognizes a Leu-Pro-x-Thr-Gly (LPXTG) motif, which is cleaved by the sortase between the threonine and glycine residues. Important for growth in macrophages. May be critical in the early stages of inhalation anthrax. This Bacillus anthracis protein is Sortase A.